A 1320-amino-acid chain; its full sequence is CAP-Gly domain-containing linker protein 1 (1320 aa).

Residues 1-53 are disordered; sequence MSMLKPSGLKAPTKILKPGSTALKTPAAAAAPLEKTVPSEKASGPPSSETQEE. Over residues 21-35 the composition is skewed to low complexity; sequence TALKTPAAAAAPLEK. Position 48 is a phosphoserine (S48). Position 50 is a phosphothreonine (T50). One can recognise a CAP-Gly 1 domain in the interval 78-120; that stretch reads GETQFAPGQWAGIVLDEPIGKNDGSVAGVRYFQCEPLKGIFTR. The segment at 97-101 is important for tubulin binding; the sequence is GKNDG. Residue S146 is modified to Phosphoserine. The span at 156-171 shows a compositional bias: polar residues; sequence VSSSPATPSNIPQKPS. The tract at residues 156–181 is disordered; it reads VSSSPATPSNIPQKPSQPVAKETSAT. Position 181 is a phosphothreonine (T181). Phosphoserine occurs at positions 194, 196, 199, and 203. The 43-residue stretch at 231-273 folds into the CAP-Gly 2 domain; it reads GETDFAKGEWCGVELDEPLGKNDGAVAGTRYFQCQPKYGLFAP. The span at 301–331 shows a compositional bias: low complexity; the sequence is TTPASLKRSPSASSLSSMSSVASSVSSKPSR. A disordered region spans residues 301–338; sequence TTPASLKRSPSASSLSSMSSVASSVSSKPSRTGLLTET. Phosphoserine is present on S309. Phosphoserine; by PKA is present on S311. S314 and S347 each carry phosphoserine. The tract at residues 1089–1109 is disordered; the sequence is SLPSNTLRESEYRKDADEEKA. Residues 1096-1109 are compositionally biased toward basic and acidic residues; sequence RESEYRKDADEEKA. S1116 carries the phosphoserine modification. The interval 1178–1201 is disordered; sequence KRQLSSSSGNTDVQTEEDERAQES. The segment covering 1180 to 1190 has biased composition (polar residues); sequence QLSSSSGNTDV. S1246 bears the Phosphoserine mark. A CCHC-type zinc finger spans residues 1299-1316; the sequence is PYCEICEMFGHWATNCND.

Interacts with MTOR; phosphorylates and regulates CLIP1. Interacts (via CAP-Gly domains) with tubulin and TUBA1B. Interacts with SLAIN2. Interacts with MAPRE1 and MAPRE3. Interacts (via zinc finger) with DCTN1. Binds preferentially to tyrosinated microtubules, and only marginally to detyrosinated microtubules. In terms of processing, phosphorylated. Phosphorylation induces conformational changes by increasing the affinity of the N-terminus for C-terminus, resulting in inhibition of its function thus decreasing its binding to microtubules and DCTN1. Exhibits a folded, autoinhibited conformation when phosphorylated and an open conformation when dephosphorylated with increased binding affinity to microtubules and DCTN1. Phosphorylation regulates its recruitment to tyrosinated microtubules and the recruitment of vesicular cargo to microtubules in neurons. Phosphorylation by MTOR may positively regulate CLIP1 association with microtubules.

Its subcellular location is the cytoplasm. The protein resides in the cytoskeleton. It is found in the cytoplasmic vesicle membrane. It localises to the cell projection. The protein localises to the ruffle. Its function is as follows. Binds to the plus end of microtubules and regulates the dynamics of the microtubule cytoskeleton. Promotes microtubule growth and microtubule bundling. Links cytoplasmic vesicles to microtubules and thereby plays an important role in intracellular vesicle trafficking. Plays a role macropinocytosis and endosome trafficking. This Rattus norvegicus (Rat) protein is CAP-Gly domain-containing linker protein 1 (Clip1).